A 305-amino-acid polypeptide reads, in one-letter code: Serine/threonine-protein phosphatase PP2A catalytic subunit (305 aa).

Mn(2+) contacts are provided by aspartate 53, histidine 55, aspartate 81, and asparagine 113. The active-site Proton donor is the histidine 114. 2 residues coordinate Mn(2+): histidine 163 and histidine 237.

This sequence belongs to the PPP phosphatase family. PP-2A subfamily. Mn(2+) serves as cofactor.

The enzyme catalyses O-phospho-L-seryl-[protein] + H2O = L-seryl-[protein] + phosphate. The catalysed reaction is O-phospho-L-threonyl-[protein] + H2O = L-threonyl-[protein] + phosphate. This is Serine/threonine-protein phosphatase PP2A catalytic subunit from Helianthus annuus (Common sunflower).